Reading from the N-terminus, the 218-residue chain is Major NAD(P)H-flavin oxidoreductase (218 aa).

FMN is bound by residues 12-16 and asparagine 73; that span reads RYTSK. 154 to 159 provides a ligand contact to NAD(+); that stretch reads LARLNI. FMN contacts are provided by residues 165 to 166 and 206 to 208; these read EG and KSR.

This sequence belongs to the nitroreductase family. In terms of assembly, homodimer. It depends on FMN as a cofactor.

In terms of biological role, involved in bioluminescence. It is a good supplier of reduced flavin mononucleotide (FMNH2) to the bioluminescence reaction. Major FMN reductase. It is capable of using both NADH and NADPH as electron donors. As electron acceptor, FMN is the most effective, FAD is considerably effective, and riboflavin is the least effective. The protein is Major NAD(P)H-flavin oxidoreductase of Aliivibrio fischeri (Vibrio fischeri).